The primary structure comprises 173 residues: Photosystem I assembly protein Ycf3 (173 aa).

TPR repeat units follow at residues 35–68 (AFSYYRDGMSAQAEGEYAEALQNYYEAMRLEIDP), 72–105 (SYILYNIGLIHTSNGEHGKALEYYYQAIERNPSL), and 120–153 (GEQAIEEGNIATSEILFNQAASYWKQAIRLAPNS).

This sequence belongs to the Ycf3 family.

The protein resides in the plastid. It localises to the chloroplast thylakoid membrane. Essential for the assembly of the photosystem I (PSI) complex. May act as a chaperone-like factor to guide the assembly of the PSI subunits. The protein is Photosystem I assembly protein Ycf3 of Mesostigma viride (Green alga).